The primary structure comprises 138 residues: Basic phospholipase A2 canebraxin B (138 aa).

The signal sequence occupies residues 1–16; sequence MRALWIVAVLLVAVEG. 7 disulfide bridges follow: Cys-42–Cys-131, Cys-44–Cys-60, Cys-59–Cys-111, Cys-65–Cys-138, Cys-66–Cys-104, Cys-73–Cys-97, and Cys-91–Cys-102. The Ca(2+) site is built by Tyr-43, Gly-45, and Gly-47. Residue His-63 is part of the active site. Residue Asp-64 coordinates Ca(2+). Residue Asp-105 is part of the active site.

This sequence belongs to the phospholipase A2 family. Group II subfamily. In terms of assembly, heterodimer of an acidic subunit and a basic chain. The acidic subunit is non-toxic, without enzymatic activity and comprises 3 peptides that are cross-linked by 7 disulfide bridges. The basic subunit is toxic, has phospholipase A2 activity and is composed of a single chain. Ca(2+) serves as cofactor. Expressed by the venom gland.

It localises to the secreted. The catalysed reaction is a 1,2-diacyl-sn-glycero-3-phosphocholine + H2O = a 1-acyl-sn-glycero-3-phosphocholine + a fatty acid + H(+). In terms of biological role, snake venom phospholipase A2 (PLA2) that shows presynaptic neurotoxicity. PLA2 catalyzes the calcium-dependent hydrolysis of the 2-acyl groups in 3-sn-phosphoglycerides. The sequence is that of Basic phospholipase A2 canebraxin B from Crotalus horridus (Timber rattlesnake).